A 431-amino-acid chain; its full sequence is Trigger factor (431 aa).

In terms of domain architecture, PPIase FKBP-type spans 164–249 (GDIAVIDFKG…IKEIKRKELP (86 aa)).

Belongs to the FKBP-type PPIase family. Tig subfamily.

The protein localises to the cytoplasm. It carries out the reaction [protein]-peptidylproline (omega=180) = [protein]-peptidylproline (omega=0). Functionally, involved in protein export. Acts as a chaperone by maintaining the newly synthesized protein in an open conformation. Functions as a peptidyl-prolyl cis-trans isomerase. This is Trigger factor from Clostridium acetobutylicum (strain ATCC 824 / DSM 792 / JCM 1419 / IAM 19013 / LMG 5710 / NBRC 13948 / NRRL B-527 / VKM B-1787 / 2291 / W).